A 248-amino-acid polypeptide reads, in one-letter code: Probable transcriptional regulatory protein Acid345_2125 (248 aa).

This sequence belongs to the TACO1 family.

Its subcellular location is the cytoplasm. This chain is Probable transcriptional regulatory protein Acid345_2125, found in Koribacter versatilis (strain Ellin345).